Reading from the N-terminus, the 724-residue chain is Solute carrier organic anion transporter family member 4C1 (724 aa).

Residues 1–105 lie on the Cytoplasmic side of the membrane; that stretch reads MKSAKGIENL…QCLQRCNTPG (105 aa). A phosphoserine mark is found at S15, S16, S24, S26, and S28. Residues 30 to 71 are disordered; that stretch reads IEVSALSSDPQRENSQPQELQKPQEPQKSPEPSLPSAPPNVS. Positions 44-60 are enriched in low complexity; that stretch reads SQPQELQKPQEPQKSPE. Residues 106–126 traverse the membrane as a helical segment; it reads GFLLHYCLLAVTQGIVVNGLV. The Extracellular segment spans residues 127 to 145; that stretch reads NISISTVEKRYEMKSSLTG. A helical transmembrane segment spans residues 146–166; that stretch reads LISSSYDISFCLLSLFVSFFG. At 167–172 the chain is on the cytoplasmic side; sequence ERGHKP. The helical transmembrane segment at 173-197 threads the bilayer; the sequence is RWLAFAAFMIGLGALVFSLPQFFSG. The Extracellular segment spans residues 198-223; sequence EYKLGSLFEDTCVTTRNSTSCTSSTS. Residues 224–254 form a helical membrane-spanning segment; that stretch reads SLSNYLYVFILGQLLLGAGGTPLYTLGTAFL. At 255-274 the chain is on the cytoplasmic side; that stretch reads DDSVPTHKSSLYIGTGYAMS. A helical transmembrane segment spans residues 275-295; that stretch reads ILGPAIGYVLGGQLLTIYIDV. The Extracellular segment spans residues 296 to 311; it reads AMGESTDVTEDDPRWL. A helical transmembrane segment spans residues 312–336; that stretch reads GAWWIGFLLSWIFAWSLIIPFSCFP. The Cytoplasmic portion of the chain corresponds to 337–377; the sequence is KHLPGTAEIQAGKTSQAHQSNSNADVKFGKSIKDFPAALKN. A helical transmembrane segment spans residues 378–399; it reads LMKNAVFMCLVLSTSSEALITT. Residues 400 to 419 lie on the Extracellular side of the membrane; the sequence is GFATFLPKFIENQFGLTSSF. The chain crosses the membrane as a helical span at residues 420–443; the sequence is AATLGGAVLIPGAALGQILGGFLV. At 444–447 the chain is on the cytoplasmic side; the sequence is SKFR. The helical transmembrane segment at 448–471 threads the bilayer; it reads MTCKNTMKFALFTSGVALTLSFVF. Residues 472–580 lie on the Extracellular side of the membrane; it reads MYAKCENEPF…ETHCAKLPIF (109 aa). The region spanning 495–549 is the Kazal-like domain; that stretch reads GNLIAPCNANCNCSRSYYYPVCGDGVQYFSPCFAGCSNPVAHRKPKVYYNCSCIE. Cystine bridges form between C501–C530, C507–C526, and C516–C547. Residues 581-603 traverse the membrane as a helical segment; sequence LCIFFIVIIFTFMAGTPITVSIL. At 604–612 the chain is on the cytoplasmic side; that stretch reads RCVNHRQRS. The helical transmembrane segment at 613–638 threads the bilayer; that stretch reads LALGIQFMVLRLLGTIPGPIIFGFTI. Residues 639–672 lie on the Extracellular side of the membrane; that stretch reads DSTCILWDINDCGIKGACWIYDNIKMAHMLVAIS. Residues 673–690 form a helical membrane-spanning segment; the sequence is VTCKVITMFFNGFAIFLY. Over 691–724 the chain is Cytoplasmic; that stretch reads KPPPSATDVSFHKENAVVTNVLAEQDLNKIVKEG.

The protein belongs to the organo anion transporter (TC 2.A.60) family. Predominantly expressed in kidney but also weakly expressed in both fetal liver and kidney.

Its subcellular location is the basolateral cell membrane. The catalysed reaction is estrone 3-sulfate(out) = estrone 3-sulfate(in). The enzyme catalyses L-thyroxine(out) = L-thyroxine(in). It catalyses the reaction 3,3',5-triiodo-L-thyronine(out) = 3,3',5-triiodo-L-thyronine(in). It carries out the reaction chenodeoxycholate(out) = chenodeoxycholate(in). The catalysed reaction is glycocholate(out) = glycocholate(in). The enzyme catalyses L-homoarginine(in) = L-homoarginine(out). It catalyses the reaction L-arginine(in) = L-arginine(out). It carries out the reaction N(omega),N(omega)-dimethyl-L-arginine(out) = N(omega),N(omega)-dimethyl-L-arginine(in). Mediates the transport of organic anions such as steroids (estrone 3-sulfate, chenodeoxycholate, glycocholate) and thyroid hormones (3,3',5-triiodo-L-thyronine (T3), L-thyroxine (T4)), in the kidney. Capable of transporting cAMP and pharmacological substances such as digoxin, ouabain and methotrexate. Transport is independent of sodium, chloride ion, and ATP. Transport activity is stimulated by an acidic extracellular environment due to increased substrate affinity to the transporter. The driving force for this transport activity is currently not known. The role of hydrogencarbonate (HCO3(-), bicarbonate) as the probable counteranion that exchanges for organic anions is still not well defined. Functions as an uptake transporter at the apical membrane, suggesting a role in renal reabsorption. Involved in the renal secretion of the uremic toxin ADMA (N(omega),N(omega)-dimethyl-L-arginine or asymmetrical dimethylarginine), which is associated to cardiovascular events and mortality, and the structurally related amino acids L-arginine and L-homoarginine (a cardioprotective biomarker). Can act bidirectionally, suggesting a dual protective role of this transport protein; exporting L-homoarginine after being synthesized in proximal tubule cells, and mediating uptake of ADMA from the blood into proximal tubule cells where it is degraded by the enzyme dimethylarginine dimethylaminohydrolase 1 (DDAH1). May be involved in sperm maturation by enabling directed movement of organic anions and compounds within or between cells. This ion-transporting process is important to maintain the strict epididymal homeostasis necessary for sperm maturation. May have a role in secretory functions since seminal vesicle epithelial cells are assumed to secrete proteins involved in decapacitation by modifying surface proteins to facilitate the acquisition of the ability to fertilize the egg. In Homo sapiens (Human), this protein is Solute carrier organic anion transporter family member 4C1.